The following is a 240-amino-acid chain: UDP-2,3-diacylglucosamine hydrolase (240 aa).

Mn(2+)-binding residues include Asp-8, His-10, Asp-41, Asn-79, and His-114. Residue 79-80 (NR) participates in substrate binding. Asp-122, Ser-160, Asn-164, Lys-167, and His-195 together coordinate substrate. Mn(2+) is bound by residues His-195 and His-197.

Belongs to the LpxH family. It depends on Mn(2+) as a cofactor.

The protein resides in the cell inner membrane. It carries out the reaction UDP-2-N,3-O-bis[(3R)-3-hydroxytetradecanoyl]-alpha-D-glucosamine + H2O = 2-N,3-O-bis[(3R)-3-hydroxytetradecanoyl]-alpha-D-glucosaminyl 1-phosphate + UMP + 2 H(+). It functions in the pathway glycolipid biosynthesis; lipid IV(A) biosynthesis; lipid IV(A) from (3R)-3-hydroxytetradecanoyl-[acyl-carrier-protein] and UDP-N-acetyl-alpha-D-glucosamine: step 4/6. Functionally, hydrolyzes the pyrophosphate bond of UDP-2,3-diacylglucosamine to yield 2,3-diacylglucosamine 1-phosphate (lipid X) and UMP by catalyzing the attack of water at the alpha-P atom. Involved in the biosynthesis of lipid A, a phosphorylated glycolipid that anchors the lipopolysaccharide to the outer membrane of the cell. The polypeptide is UDP-2,3-diacylglucosamine hydrolase (Escherichia coli O17:K52:H18 (strain UMN026 / ExPEC)).